Consider the following 259-residue polypeptide: Protein LEAD-SENSITIVE 1 (259 aa).

Residues Tyr20 to Gly168 enclose the LRAT domain. Catalysis depends on residues His30 and His42. Catalysis depends on Cys152, which acts as the Acyl-thioester intermediate.

As to expression, highly expressed in inflorescences, siliques and stems, and, to a lower extent, in roots and leaves.

The protein resides in the cytoplasm. Functionally, confers tolerance to lead ions (Pb) stress mediated by Pb(NO(3))(2) probably by promoting Pb accumulation leading to subsequent glutathione-dependent phytochelatin (PC) synthesis and related gene expression, including PDR12/ABCG40, GSH1, GSH2, GR1, GR2, PCS1 and PCS2. The chain is Protein LEAD-SENSITIVE 1 from Arabidopsis thaliana (Mouse-ear cress).